The chain runs to 481 residues: Long chain base biosynthesis protein 1b (481 aa).

Residues 32–52 form a helical membrane-spanning segment; that stretch reads FGIHIDGHLVVEGLLIAAILF.

This sequence belongs to the class-II pyridoxal-phosphate-dependent aminotransferase family. As to quaternary structure, heterodimer with LCB2. Component of the serine palmitoyltransferase (SPT) complex, composed of LCB1 and LCB2. Pyridoxal 5'-phosphate serves as cofactor.

It is found in the endoplasmic reticulum membrane. The enzyme catalyses L-serine + hexadecanoyl-CoA + H(+) = 3-oxosphinganine + CO2 + CoA. The protein operates within lipid metabolism; sphingolipid metabolism. Serine palmitoyltransferase (SPT). The heterodimer formed with LCB2 constitutes the catalytic core. The protein is Long chain base biosynthesis protein 1b of Oryza sativa subsp. japonica (Rice).